A 178-amino-acid chain; its full sequence is Large ribosomal subunit protein bL25 (178 aa).

This sequence belongs to the bacterial ribosomal protein bL25 family. CTC subfamily. In terms of assembly, part of the 50S ribosomal subunit; part of the 5S rRNA/L5/L18/L25 subcomplex. Contacts the 5S rRNA. Binds to the 5S rRNA independently of L5 and L18.

In terms of biological role, this is one of the proteins that binds to the 5S RNA in the ribosome where it forms part of the central protuberance. The chain is Large ribosomal subunit protein bL25 from Helicobacter pylori (strain ATCC 700392 / 26695) (Campylobacter pylori).